The primary structure comprises 120 residues: Ribosome-binding factor A (120 aa).

Belongs to the RbfA family. Monomer. Binds 30S ribosomal subunits, but not 50S ribosomal subunits or 70S ribosomes.

The protein localises to the cytoplasm. In terms of biological role, one of several proteins that assist in the late maturation steps of the functional core of the 30S ribosomal subunit. Associates with free 30S ribosomal subunits (but not with 30S subunits that are part of 70S ribosomes or polysomes). Required for efficient processing of 16S rRNA. May interact with the 5'-terminal helix region of 16S rRNA. In Borreliella burgdorferi (strain ATCC 35210 / DSM 4680 / CIP 102532 / B31) (Borrelia burgdorferi), this protein is Ribosome-binding factor A.